A 393-amino-acid polypeptide reads, in one-letter code: MYLIGEALVGDGAELAHIDLIMGNKEGAVGQAFANSISQLSKGHTPLLAVVRPNLPTKPSTLIIPKVTLKKEYQVNQMFGPVQAAVAKAVADSIEEGVFEGVDIEDTVIMASVFVHPTAQDYNKIYRFNYGAMKLALRRALDRFPDVETLLHEKDRAAHAVMGFKVQRLWDPPYLQVAMDLVDRNHMNRVLDELPQNDHLIIEAGTPLIKKFGLSIISEIRERRPNAFIVADLKTLDTGNLEARMTADAGADAVVISGLAPISTIEKAIEDTRKTGIYTVIDMLNVKDPVAVVKQLKVKPDVVELHRGIDVEDTAYAWGDIPAIKKAGGERLLVATAGGIRQGVVKDARKAGADILVVGRAITASKNIQHAAEEFLEELSTEEIDQFRIMTDF.

The formaldehyde-activating enzyme stretch occupies residues 1 to 161 (MYLIGEALVG…HEKDRAAHAV (161 aa)). Catalysis depends on His17, which acts as the Proton donor. The substrate site is built by Asp19, Leu48, Lys66, Thr68, and Gln83. Positions 162–393 (MGFKVQRLWD…IDQFRIMTDF (232 aa)) are 3-hexulose-6-phosphate synthase.

In the N-terminal section; belongs to the formaldehyde-activating enzyme family. The protein in the C-terminal section; belongs to the HPS/KGPDC family. HPS subfamily.

It catalyses the reaction 5,6,7,8-tetrahydromethanopterin + formaldehyde = 5,10-methylenetetrahydromethanopterin + H2O. It carries out the reaction D-ribulose 5-phosphate + formaldehyde = D-arabino-hex-3-ulose 6-phosphate. Its pathway is carbohydrate biosynthesis; D-ribose 5-phosphate biosynthesis. Catalyzes the condensation of formaldehyde with tetrahydromethanopterin (H(4)MPT) to 5,10-methylenetetrahydromethanopterin. Functionally, catalyzes the reversible formation of ribulose-5-phosphate and formaldehyde from 3-hexulose-6-phosphate. The polypeptide is Bifunctional enzyme Fae/Hps (Methanoculleus marisnigri (strain ATCC 35101 / DSM 1498 / JR1)).